A 306-amino-acid polypeptide reads, in one-letter code: Ribosomal RNA small subunit methyltransferase H (306 aa).

Residues 33–35 (GGY), D51, F78, D96, and Q103 contribute to the S-adenosyl-L-methionine site.

It belongs to the methyltransferase superfamily. RsmH family.

Its subcellular location is the cytoplasm. It carries out the reaction cytidine(1402) in 16S rRNA + S-adenosyl-L-methionine = N(4)-methylcytidine(1402) in 16S rRNA + S-adenosyl-L-homocysteine + H(+). Its function is as follows. Specifically methylates the N4 position of cytidine in position 1402 (C1402) of 16S rRNA. The polypeptide is Ribosomal RNA small subunit methyltransferase H (Rickettsia felis (strain ATCC VR-1525 / URRWXCal2) (Rickettsia azadi)).